The primary structure comprises 1061 residues: Zinc finger protein ZFPM1 (1061 aa).

The CCHC FOG-type 1 zinc finger occupies V152–Q185. Residues C160, C163, H176, and C181 each contribute to the Zn(2+) site. 3 consecutive C2H2-type zinc fingers follow at residues R204–H228, F234–H256, and G262–H285. Disordered regions lie at residues P349–T393 and T435–T455. Positions S378–S388 are enriched in low complexity. Polar residues predominate over residues E436–P448. The CCHC FOG-type 2 zinc finger occupies S508 to H541. Residues C516, C519, H532, and C537 each contribute to the Zn(2+) site. Disordered stretches follow at residues A561–A586 and M599–V630. The span at G565–S574 shows a compositional bias: polar residues. The CCHC FOG-type 3 zinc finger occupies E623–H656. Zn(2+) contacts are provided by C631, C634, H647, and C652. Residues R661 to R681 are disordered. The tract at residues P736–K742 is interaction with CTBP. The CCHC FOG-type 4 zinc finger occupies A759–P792. 4 residues coordinate Zn(2+): C767, C770, H783, and C788. Residues T869–H892 form a C2H2-type 4 zinc finger. A disordered region spans residues R917 to S1021. Low complexity-rich tracts occupy residues V933–P942 and T954–R972. The segment covering P973–N984 has biased composition (pro residues). The CCHC FOG-type 5 zinc-finger motif lies at V1023–A1056. C1031, C1034, H1047, and C1052 together coordinate Zn(2+).

It belongs to the FOG (Friend of GATA) family. As to quaternary structure, interacts with corepressor CTBP. Interacts with the N-terminal zinc-finger of GATA1 and probably GATA2. As to expression, predominantly expressed in heart and brain. Also expressed in ventral blood island and adult spleen.

The protein resides in the nucleus. Functionally, transcription regulator that plays an central role in red blood cell differentiation. Essential cofactor that acts via the formation of a heterodimer with transcription factors of the GATA family GATA1 and GATA2. Such heterodimer can both activate or repress transcriptional activity, depending on the cell and promoter context. Acts as a repressor of red blood cells, probably by modulating activity of GATA1. This is Zinc finger protein ZFPM1 (zfpm1) from Xenopus laevis (African clawed frog).